Here is a 306-residue protein sequence, read N- to C-terminus: MNEFINFDEISRETWQNLYNTSIAPLTYDELESIRSLNDEISLQDVEDVYLPLIHLLRLYKKNLEDMSYSKGLFLQKIVKTPPLIIGISGSVAVGKSTTARLLQLLLSRAFPKLTVDLVTTDGFLYTTDDLKNMGILDRKGFPESYDMEKLTSFLYHVKNGERFEVPIYSHETYDILPNQSQIIDSPDILIVEGINVLQNPQNQLLYISDFYDFSIYVDADEKLIEKWYLERFDSLLKLAKYDQTNFYHQFTKMPEDKVLNLARETWARVNRVNLREYIEPTRNRAEIILHKSENHHIDKIYLKKF.

G90–S97 is an ATP binding site.

This sequence belongs to the prokaryotic pantothenate kinase family.

The protein localises to the cytoplasm. The enzyme catalyses (R)-pantothenate + ATP = (R)-4'-phosphopantothenate + ADP + H(+). Its pathway is cofactor biosynthesis; coenzyme A biosynthesis; CoA from (R)-pantothenate: step 1/5. The polypeptide is Pantothenate kinase (Lactococcus lactis subsp. cremoris (strain SK11)).